The following is a 93-amino-acid chain: Small ribosomal subunit protein uS19c (93 aa).

This sequence belongs to the universal ribosomal protein uS19 family.

The protein localises to the plastid. It localises to the chloroplast. Protein S19 forms a complex with S13 that binds strongly to the 16S ribosomal RNA. This chain is Small ribosomal subunit protein uS19c, found in Stigeoclonium helveticum (Green alga).